A 44-amino-acid polypeptide reads, in one-letter code: uncharacterized protein (44 aa).

Positions 1–28 are cleaved as a signal peptide; that stretch reads MLRDLGRRVAIAAILSGIILGGMSISLA.

This is an uncharacterized protein from Bacillus subtilis (strain 168).